A 1299-amino-acid polypeptide reads, in one-letter code: Probable membrane antigen 75 (1299 aa).

It localises to the virion tegument. This is Probable membrane antigen 75 (75) from Saimiriine herpesvirus 2 (strain 11) (SaHV-2).